A 392-amino-acid chain; its full sequence is Succinate--CoA ligase [ADP-forming] subunit beta (392 aa).

Positions 9-248 constitute an ATP-grasp domain; that stretch reads KDILRKFGVA…TNEEDPFEVE (240 aa). ATP is bound by residues Lys-50, 57–59, Glu-103, Met-106, and Glu-111; that span reads GRG. Residues Asn-203 and Asp-217 each coordinate Mg(2+). Substrate-binding positions include Asn-268 and 325–327; that span reads GIV.

This sequence belongs to the succinate/malate CoA ligase beta subunit family. As to quaternary structure, heterotetramer of two alpha and two beta subunits. Mg(2+) serves as cofactor.

It catalyses the reaction succinate + ATP + CoA = succinyl-CoA + ADP + phosphate. The catalysed reaction is GTP + succinate + CoA = succinyl-CoA + GDP + phosphate. Its pathway is carbohydrate metabolism; tricarboxylic acid cycle; succinate from succinyl-CoA (ligase route): step 1/1. Succinyl-CoA synthetase functions in the citric acid cycle (TCA), coupling the hydrolysis of succinyl-CoA to the synthesis of either ATP or GTP and thus represents the only step of substrate-level phosphorylation in the TCA. The beta subunit provides nucleotide specificity of the enzyme and binds the substrate succinate, while the binding sites for coenzyme A and phosphate are found in the alpha subunit. The polypeptide is Succinate--CoA ligase [ADP-forming] subunit beta (Pelodictyon phaeoclathratiforme (strain DSM 5477 / BU-1)).